The chain runs to 455 residues: Argininosuccinate lyase (455 aa).

This sequence belongs to the lyase 1 family. Argininosuccinate lyase subfamily.

The protein localises to the cytoplasm. It catalyses the reaction 2-(N(omega)-L-arginino)succinate = fumarate + L-arginine. The protein operates within amino-acid biosynthesis; L-arginine biosynthesis; L-arginine from L-ornithine and carbamoyl phosphate: step 3/3. This Roseiflexus castenholzii (strain DSM 13941 / HLO8) protein is Argininosuccinate lyase.